The primary structure comprises 335 residues: Lipoyl synthase (335 aa).

[4Fe-4S] cluster is bound by residues Cys55, Cys60, Cys66, Cys81, Cys85, Cys88, and Ser292. The Radical SAM core domain occupies 67–281 (WEDREATFLI…SKAAEEIGFL (215 aa)).

This sequence belongs to the radical SAM superfamily. Lipoyl synthase family. [4Fe-4S] cluster is required as a cofactor.

The protein localises to the cytoplasm. It catalyses the reaction [[Fe-S] cluster scaffold protein carrying a second [4Fe-4S](2+) cluster] + N(6)-octanoyl-L-lysyl-[protein] + 2 oxidized [2Fe-2S]-[ferredoxin] + 2 S-adenosyl-L-methionine + 4 H(+) = [[Fe-S] cluster scaffold protein] + N(6)-[(R)-dihydrolipoyl]-L-lysyl-[protein] + 4 Fe(3+) + 2 hydrogen sulfide + 2 5'-deoxyadenosine + 2 L-methionine + 2 reduced [2Fe-2S]-[ferredoxin]. The protein operates within protein modification; protein lipoylation via endogenous pathway; protein N(6)-(lipoyl)lysine from octanoyl-[acyl-carrier-protein]: step 2/2. Catalyzes the radical-mediated insertion of two sulfur atoms into the C-6 and C-8 positions of the octanoyl moiety bound to the lipoyl domains of lipoate-dependent enzymes, thereby converting the octanoylated domains into lipoylated derivatives. This chain is Lipoyl synthase, found in Kocuria rhizophila (strain ATCC 9341 / DSM 348 / NBRC 103217 / DC2201).